The primary structure comprises 111 residues: Large ribosomal subunit protein uL24 (111 aa).

Belongs to the universal ribosomal protein uL24 family. In terms of assembly, part of the 50S ribosomal subunit.

In terms of biological role, one of two assembly initiator proteins, it binds directly to the 5'-end of the 23S rRNA, where it nucleates assembly of the 50S subunit. Its function is as follows. One of the proteins that surrounds the polypeptide exit tunnel on the outside of the subunit. The polypeptide is Large ribosomal subunit protein uL24 (Heliobacterium modesticaldum (strain ATCC 51547 / Ice1)).